Consider the following 423-residue polypeptide: MSNASINHASIQLENAAVSNVSAFNKTKRKLMMLGPAFIAAIGYIDPGNFATNIESGSSFGYQLLWVVLWANLMAMLIQYLSAKLGIVTGKNLAEHLRDHLPNKWAVGFYWIQAEIIAIATDLAEFIGAAVGFQLVFGISLMEGAMITAVATVMILILNQKGQKPLEVVIGSLLMLVAVIYIAELFFAHPAGGEMVKGLLTPTFTDSHQIYLAAGILGATVMPHVIYLHSALFKNSYGESTKTRLRTTRFDVLIAMVIAGFVNIAIVAMAAAVFHYSGNQHVAEIETAYMTLTPLVGKAASVLFGVSLIASGLSSTVVGTMAGQVVMQGFVRFSIPMWVRRFITMAPSFVVIGLGMNTTDILVMSQVVLSFGIALAIIPLLIFTNSERLMGEFKNNKWVSYAGVVIVSLVLSLNAYLMVTLTA.

Transmembrane regions (helical) follow at residues 31 to 51 (LMML…GNFA), 58 to 78 (SSFG…AMLI), 116 to 136 (IIAI…FQLV), 137 to 157 (FGIS…MILI), 168 to 188 (VVIG…LFFA), 213 to 233 (AAGI…SALF), 254 to 274 (IAMV…AAVF), 302 to 322 (VLFG…GTMA), 342 to 362 (FITM…TDIL), 363 to 383 (VMSQ…LLIF), and 401 to 421 (YAGV…MVTL).

The protein belongs to the NRAMP family.

The protein localises to the cell inner membrane. In terms of biological role, h(+)-stimulated, divalent metal cation uptake system. The chain is Divalent metal cation transporter MntH from Vibrio campbellii (strain ATCC BAA-1116).